The chain runs to 311 residues: ATP synthase subunit a (311 aa).

The next 6 helical transmembrane spans lie at 62-82 (AVHVDTLGWGIFLALLLGFIF), 123-143 (IAPMGLTIFSWVFMMNLMDLI), 170-190 (DPNATLGMAFTVFALMIMFSI), 213-233 (LWYLNILLIPVNTILETVALI), 253-273 (IFILIALLFSVGLVMGFVGGV), and 276-296 (WAWAVFHILVITLQAFIFMVL).

The protein belongs to the ATPase A chain family. In terms of assembly, F-type ATPases have 2 components, CF(1) - the catalytic core - and CF(0) - the membrane proton channel. CF(1) has five subunits: alpha(3), beta(3), gamma(1), delta(1), epsilon(1). CF(0) has three main subunits: a(1), b(2) and c(9-12). The alpha and beta chains form an alternating ring which encloses part of the gamma chain. CF(1) is attached to CF(0) by a central stalk formed by the gamma and epsilon chains, while a peripheral stalk is formed by the delta and b chains.

It localises to the cell inner membrane. Key component of the proton channel; it plays a direct role in the translocation of protons across the membrane. The protein is ATP synthase subunit a of Saccharophagus degradans (strain 2-40 / ATCC 43961 / DSM 17024).